A 161-amino-acid polypeptide reads, in one-letter code: MRLFRSREVVGIAADALDFALEASAETHPNEYMGLLRGEEARRVGVDRDGYVVTDVLIIPGTVSDPYSATVRNDLVPNDFHAVGSIHSHPNGVLRPSDADLDTFGSGRVHIIIGSPYGPDDWEAFDQSGEVRDLDVLDADLSDPESFFDFTQDDIDAELDR.

The MPN domain maps to 10–131; that stretch reads VGIAADALDF…WEAFDQSGEV (122 aa). E31 functions as the Proton donor/acceptor in the catalytic mechanism. Positions 87, 89, and 100 each coordinate Zn(2+). Residues 87 to 100 carry the JAMM motif motif; sequence HSHPNGVLRPSDAD.

It belongs to the peptidase M67B family. In terms of assembly, monomer and homodimer. Zn(2+) is required as a cofactor.

Probable metalloprotease. Does not hydrolyze SAMP1- and SAMP2-protein conjugates, diglycine-AMC, Ub-AMC, hemoglobin, cytochrome c, carbonic anhydrase, creatinine phosphokinase, beta-amylase and bovine serum albumin. The protein is Probable metalloprotease HVO_1016 of Haloferax volcanii (strain ATCC 29605 / DSM 3757 / JCM 8879 / NBRC 14742 / NCIMB 2012 / VKM B-1768 / DS2) (Halobacterium volcanii).